A 334-amino-acid polypeptide reads, in one-letter code: Holliday junction branch migration complex subunit RuvB (334 aa).

Residues 1 to 182 form a large ATPase domain (RuvB-L) region; the sequence is MDERLVSSEA…FGVLSRLEYY (182 aa). ATP-binding positions include Leu-21, Arg-22, Gly-63, Lys-66, Thr-67, Thr-68, 129-131, Arg-172, Tyr-182, and Arg-219; that span reads EDF. Residue Thr-67 coordinates Mg(2+). The tract at residues 183–253 is small ATPAse domain (RuvB-S); sequence TQEELTDIVS…IAHDALERLQ (71 aa). Residues 256–334 form a head domain (RuvB-H) region; it reads ALGLDHIDHK…HFRLEAPARD (79 aa). DNA is bound by residues Arg-311 and Arg-316.

This sequence belongs to the RuvB family. Homohexamer. Forms an RuvA(8)-RuvB(12)-Holliday junction (HJ) complex. HJ DNA is sandwiched between 2 RuvA tetramers; dsDNA enters through RuvA and exits via RuvB. An RuvB hexamer assembles on each DNA strand where it exits the tetramer. Each RuvB hexamer is contacted by two RuvA subunits (via domain III) on 2 adjacent RuvB subunits; this complex drives branch migration. In the full resolvosome a probable DNA-RuvA(4)-RuvB(12)-RuvC(2) complex forms which resolves the HJ.

It is found in the cytoplasm. It catalyses the reaction ATP + H2O = ADP + phosphate + H(+). The RuvA-RuvB-RuvC complex processes Holliday junction (HJ) DNA during genetic recombination and DNA repair, while the RuvA-RuvB complex plays an important role in the rescue of blocked DNA replication forks via replication fork reversal (RFR). RuvA specifically binds to HJ cruciform DNA, conferring on it an open structure. The RuvB hexamer acts as an ATP-dependent pump, pulling dsDNA into and through the RuvAB complex. RuvB forms 2 homohexamers on either side of HJ DNA bound by 1 or 2 RuvA tetramers; 4 subunits per hexamer contact DNA at a time. Coordinated motions by a converter formed by DNA-disengaged RuvB subunits stimulates ATP hydrolysis and nucleotide exchange. Immobilization of the converter enables RuvB to convert the ATP-contained energy into a lever motion, pulling 2 nucleotides of DNA out of the RuvA tetramer per ATP hydrolyzed, thus driving DNA branch migration. The RuvB motors rotate together with the DNA substrate, which together with the progressing nucleotide cycle form the mechanistic basis for DNA recombination by continuous HJ branch migration. Branch migration allows RuvC to scan DNA until it finds its consensus sequence, where it cleaves and resolves cruciform DNA. This chain is Holliday junction branch migration complex subunit RuvB, found in Bacillus velezensis (strain DSM 23117 / BGSC 10A6 / LMG 26770 / FZB42) (Bacillus amyloliquefaciens subsp. plantarum).